The sequence spans 104 residues: Large ribosomal subunit protein bL21 (104 aa).

It belongs to the bacterial ribosomal protein bL21 family. As to quaternary structure, part of the 50S ribosomal subunit. Contacts protein L20.

In terms of biological role, this protein binds to 23S rRNA in the presence of protein L20. In Pseudomonas putida (strain W619), this protein is Large ribosomal subunit protein bL21.